A 223-amino-acid chain; its full sequence is MSQTKTLKVRVALLCILVGIVLALVAVVTDHWAVLSPHVEHHNSTCEAAHFGLWRICTKRIFVGDKERSCGPITLPGEKNCSYFRHFNPGESSEIFEVTTQKEYSISAAAIAIFSLGFIIVGTLCALLSFRKKRDYLLRPASMFYIFAGLCLSVSAEVMRQSVQRMVDSEHTAWIAHSLAWSFICACVAAALLLVGGLALLLLALPRMPRDPWESCMDAEPEH.

Residues 1-10 (MSQTKTLKVR) are Cytoplasmic-facing. A helical transmembrane segment spans residues 11-29 (VALLCILVGIVLALVAVVT). Topologically, residues 30–109 (DHWAVLSPHV…TQKEYSISAA (80 aa)) are extracellular. 2 N-linked (GlcNAc...) asparagine glycosylation sites follow: asparagine 43 and asparagine 80. Cysteine 57 and cysteine 81 are joined by a disulfide. The chain crosses the membrane as a helical span at residues 110–130 (AIAIFSLGFIIVGTLCALLSF). Topologically, residues 131 to 135 (RKKRD) are cytoplasmic. A helical transmembrane segment spans residues 136-156 (YLLRPASMFYIFAGLCLSVSA). Residues 157–180 (EVMRQSVQRMVDSEHTAWIAHSLA) lie on the Extracellular side of the membrane. Residues 181–205 (WSFICACVAAALLLVGGLALLLLAL) form a helical membrane-spanning segment. The Cytoplasmic portion of the chain corresponds to 206-223 (PRMPRDPWESCMDAEPEH).

Belongs to the PMP-22/EMP/MP20 family. CACNG subfamily. In terms of assembly, component of a calcium channel complex consisting of a pore-forming alpha subunit (CACNA1S) and the ancillary subunits CACNB1 or CACNB2, CACNG1 and CACNA2D1. The channel complex contains alpha, beta, gamma and delta subunits in a 1:1:1:1 ratio, i.e. it contains either CACNB1 or CACNB2. N-glycosylated.

It is found in the cell membrane. Its subcellular location is the sarcolemma. Its function is as follows. Regulatory subunit of the voltage-gated calcium channel that gives rise to L-type calcium currents in skeletal muscle. Regulates channel inactivation kinetics. The protein is Voltage-dependent calcium channel gamma-1 subunit (CACNG1) of Bos taurus (Bovine).